An 86-amino-acid polypeptide reads, in one-letter code: UPF0297 protein SSP1144 (86 aa).

It belongs to the UPF0297 family.

This Staphylococcus saprophyticus subsp. saprophyticus (strain ATCC 15305 / DSM 20229 / NCIMB 8711 / NCTC 7292 / S-41) protein is UPF0297 protein SSP1144.